We begin with the raw amino-acid sequence, 208 residues long: Small ribosomal subunit protein uS2 (208 aa).

This sequence belongs to the universal ribosomal protein uS2 family.

This chain is Small ribosomal subunit protein uS2, found in Pyrobaculum calidifontis (strain DSM 21063 / JCM 11548 / VA1).